A 307-amino-acid chain; its full sequence is Zinc transporter ZIP9 (307 aa).

Residues 4 to 24 (FISISLLSLAMLVGCYVAGII) form a helical membrane-spanning segment. N-linked (GlcNAc...) asparagine glycosylation is present at Asn-29. 5 consecutive transmembrane segments (helical) span residues 35-55 (LKLV…AVIV), 106-126 (AYIG…DQIG), 146-166 (ITTT…LGAA), 176-196 (LIVF…LVSF), and 210-230 (HLLV…LGLS). A glycan (N-linked (GlcNAc...) asparagine) is linked at Asn-241. Helical transmembrane passes span 244–264 (GVAM…HVLP) and 286–306 (LEVA…VGHQ).

Belongs to the ZIP transporter (TC 2.A.5) family. Highly expressed in pancreas, testis, and pituitary and moderately in the kidney, liver, uterus, heart, prostate, and brain, whereas expression is lower in the ovary and colon.

Its subcellular location is the golgi apparatus. The protein localises to the trans-Golgi network membrane. It is found in the cell membrane. The protein resides in the cytoplasm. It localises to the perinuclear region. Its subcellular location is the mitochondrion. The protein localises to the nucleus. The catalysed reaction is Zn(2+)(in) = Zn(2+)(out). Its function is as follows. Transports zinc ions across cell and organelle membranes into the cytoplasm and regulates intracellular zinc homeostasis. Participates in the zinc ions efflux out of the secretory compartments. Regulates intracellular zinc level, resulting in the enhancement of AKT1 and MAPK3/MAPK1 (Erk1/2) phosphorylation in response to the BCR activation. Also functions as a membrane androgen receptor that mediates, through a G protein, the non-classical androgen signaling pathway, characterized by the activation of MAPK3/MAPK1 (Erk1/2) and transcription factors CREB1 or ATF1. This pathway contributes to CLDN1 and CLDN5 expression and tight junction formation between adjacent Sertoli cells. Mediates androgen-induced vascular endothelial cell proliferation through activation of an inhibitory G protein leading to the AKT1 and MAPK3/MAPK1 (Erk1/2) activation which in turn modulate inhibition (phosphorylation) of GSK3B and CCND1 transcription. Moreover, has dual functions as a membrane-bound androgen receptor and as an androgen-dependent zinc transporter both of which are mediated through an inhibitory G protein (Gi) that mediates both MAP kinase and zinc signaling leading to the androgen-dependent apoptotic process. This chain is Zinc transporter ZIP9, found in Homo sapiens (Human).